A 68-amino-acid chain; its full sequence is Protein transport protein Sec61 subunit gamma (68 aa).

Residues 1 to 32 are Cytoplasmic-facing; sequence MDQFQALIEPARQFSKDSYRLVKRCTKPDRKE. Residues 33–61 form a helical membrane-spanning segment; sequence YQKIAMATAIGFAIMGFIGFFVKLIHIPI. Over 62 to 68 the chain is Extracellular; it reads NNIIVGA.

Belongs to the SecE/SEC61-gamma family. Heterotrimeric complex composed of SEC61-alpha, SEC61-beta and SEC61-gamma. As to expression, expressed in the germline. Expression in the germline is regulated in a sex- and meiotic cycle stage-specific manner. Expressed in somatic tissues including the intestine and somatic gonad. Expressed in the intestine more highly in hermaprodites than in males. In hermaphrodites, weakly expressed in the spermatheca.

Its subcellular location is the endoplasmic reticulum membrane. In terms of biological role, required for oocyte development and ovulation. Required for the translocation of secretory and transmembrane proteins into the endoplasmic reticulum in vitro. This Caenorhabditis elegans protein is Protein transport protein Sec61 subunit gamma.